Reading from the N-terminus, the 446-residue chain is WD repeat domain phosphoinositide-interacting protein 1 (446 aa).

The Nuclear receptor interaction motif lies at 131–136 (LLKTVL). A WD 1 repeat occupies 184–224 (AHEGTLAAITFNSSGSKLASASEKGTVIRVFSVPEGQKLYE). A L/FRRG motif motif is present at residues 225–228 (FRRG). WD repeat units lie at residues 230–269 (KRYV…DSRP) and 312–351 (SGQK…GGEC). A disordered region spans residues 386 to 406 (ARPSTSAASTVPGYSEDGGAL).

The protein belongs to the WD repeat PROPPIN family. Interacts with androgen receptor (AR) and the estrogen receptors ESR1 and ESR2. Interacts with WIPI2. Interacts with WDR45. Interacts with ATG16L1. May interact with NUDC.

It is found in the golgi apparatus. It localises to the trans-Golgi network. The protein resides in the endosome. The protein localises to the cytoplasmic vesicle. Its subcellular location is the clathrin-coated vesicle. It is found in the preautophagosomal structure membrane. It localises to the cytoplasm. The protein resides in the cytoskeleton. Component of the autophagy machinery that controls the major intracellular degradation process by which cytoplasmic materials are packaged into autophagosomes and delivered to lysosomes for degradation. Plays an important role in starvation- and calcium-mediated autophagy, as well as in mitophagy. Functions downstream of the ULK1 and PI3-kinases that produce phosphatidylinositol 3-phosphate (PtdIns3P) on membranes of the endoplasmic reticulum once activated. Binds phosphatidylinositol 3-phosphate (PtdIns3P), and maybe other phosphoinositides including PtdIns3,5P2 and PtdIns5P, and is recruited to phagophore assembly sites at the endoplasmic reticulum membranes. There, it assists WIPI2 in the recruitment of ATG12-ATG5-ATG16L1, a complex that directly controls the elongation of the nascent autophagosomal membrane. Together with WDR45/WIPI4, promotes ATG2 (ATG2A or ATG2B)-mediated lipid transfer by enhancing ATG2-association with phosphatidylinositol 3-monophosphate (PI3P)-containing membranes. Involved in xenophagy of Staphylococcus aureus. Invading S.aureus cells become entrapped in autophagosome-like WIPI1 positive vesicles targeted for lysosomal degradation. Also plays a distinct role in controlling the transcription of melanogenic enzymes and melanosome maturation, a process that is distinct from starvation-induced autophagy. May also regulate the trafficking of proteins involved in the mannose-6-phosphate receptor (MPR) recycling pathway. The sequence is that of WD repeat domain phosphoinositide-interacting protein 1 (Wipi1) from Mus musculus (Mouse).